Here is a 100-residue protein sequence, read N- to C-terminus: NADH-quinone oxidoreductase subunit K (100 aa).

3 helical membrane-spanning segments follow: residues 4–24, 28–48, and 60–80; these read LQHG…GLLI, LLFM…AFVV, and VMYI…LALL.

It belongs to the complex I subunit 4L family. In terms of assembly, NDH-1 is composed of 13 different subunits. Subunits NuoA, H, J, K, L, M, N constitute the membrane sector of the complex.

The protein localises to the cell inner membrane. The catalysed reaction is a quinone + NADH + 5 H(+)(in) = a quinol + NAD(+) + 4 H(+)(out). NDH-1 shuttles electrons from NADH, via FMN and iron-sulfur (Fe-S) centers, to quinones in the respiratory chain. The immediate electron acceptor for the enzyme in this species is believed to be ubiquinone. Couples the redox reaction to proton translocation (for every two electrons transferred, four hydrogen ions are translocated across the cytoplasmic membrane), and thus conserves the redox energy in a proton gradient. In Pectobacterium carotovorum subsp. carotovorum (strain PC1), this protein is NADH-quinone oxidoreductase subunit K.